Here is a 358-residue protein sequence, read N- to C-terminus: Cilia- and flagella-associated protein 263 (358 aa).

3 coiled-coil regions span residues 93–138 (YKKM…FKRN), 176–200 (RKNS…EMAE), and 266–343 (RTKL…YTKS).

The protein belongs to the CFAP263 family. In terms of assembly, forms a complex with CFAP184; the interaction is required for functional activity in cilia. Interacts with HAP1 and PCM1.

It localises to the cytoplasm. The protein localises to the cytoskeleton. It is found in the microtubule organizing center. The protein resides in the centrosome. Its subcellular location is the centriolar satellite. It localises to the cell projection. The protein localises to the cilium. Its function is as follows. Component of centriolar satellites contributing to primary cilium formation. In complex with CFAP263, acts as a regulator of ciliary beating that connects radial spoke 3 (RS3) to the inner dynein arm (IDA) and the nexin-dynein regulatory complex (N-DRC). The complex is positioned parallel to N-DRC and forms a connection between the arch at the base of RS3, the IDA tail and N-DRC. This is Cilia- and flagella-associated protein 263 (cfap263) from Danio rerio (Zebrafish).